The sequence spans 347 residues: F-box protein At2g14500 (347 aa).

An F-box domain is found at 6–52 (PLTLSELPHDLLRNIFNRLSFADFHRATWNSISKQTAPPKTKSPWLI).

The polypeptide is F-box protein At2g14500 (Arabidopsis thaliana (Mouse-ear cress)).